The following is a 471-amino-acid chain: 3-isopropylmalate dehydratase large subunit (471 aa).

3 residues coordinate [4Fe-4S] cluster: cysteine 347, cysteine 407, and cysteine 410.

Belongs to the aconitase/IPM isomerase family. LeuC type 1 subfamily. As to quaternary structure, heterodimer of LeuC and LeuD. [4Fe-4S] cluster serves as cofactor.

It carries out the reaction (2R,3S)-3-isopropylmalate = (2S)-2-isopropylmalate. Its pathway is amino-acid biosynthesis; L-leucine biosynthesis; L-leucine from 3-methyl-2-oxobutanoate: step 2/4. Functionally, catalyzes the isomerization between 2-isopropylmalate and 3-isopropylmalate, via the formation of 2-isopropylmaleate. The chain is 3-isopropylmalate dehydratase large subunit from Geobacillus kaustophilus (strain HTA426).